The chain runs to 113 residues: Large ribosomal subunit protein uL22 (113 aa).

Belongs to the universal ribosomal protein uL22 family. As to quaternary structure, part of the 50S ribosomal subunit.

Functionally, this protein binds specifically to 23S rRNA; its binding is stimulated by other ribosomal proteins, e.g. L4, L17, and L20. It is important during the early stages of 50S assembly. It makes multiple contacts with different domains of the 23S rRNA in the assembled 50S subunit and ribosome. In terms of biological role, the globular domain of the protein is located near the polypeptide exit tunnel on the outside of the subunit, while an extended beta-hairpin is found that lines the wall of the exit tunnel in the center of the 70S ribosome. This Bacillus subtilis (strain 168) protein is Large ribosomal subunit protein uL22.